The primary structure comprises 249 residues: Putative S-adenosyl-L-methionine-dependent methyltransferase Mjls_0570 (249 aa).

S-adenosyl-L-methionine contacts are provided by residues Asp-111 and 141–142; that span reads DL.

The protein belongs to the UPF0677 family.

Functionally, exhibits S-adenosyl-L-methionine-dependent methyltransferase activity. This chain is Putative S-adenosyl-L-methionine-dependent methyltransferase Mjls_0570, found in Mycobacterium sp. (strain JLS).